We begin with the raw amino-acid sequence, 344 residues long: Holliday junction branch migration complex subunit RuvB (344 aa).

The tract at residues 1 to 181 is large ATPase domain (RuvB-L); it reads MERIVTPAEM…FGVLCAMEYY (181 aa). Residues leucine 20, arginine 21, glycine 62, lysine 65, threonine 66, threonine 67, 128-130, arginine 171, tyrosine 181, and arginine 218 each bind ATP; that span reads EDY. Threonine 66 lines the Mg(2+) pocket. Positions 182-252 are small ATPAse domain (RuvB-S); the sequence is DETQLKEIVI…EARDALELLE (71 aa). The interval 255–344 is head domain (RuvB-H); it reads NQGFDKVDNK…SNKGQTSFFK (90 aa). 2 residues coordinate DNA: arginine 310 and arginine 315.

This sequence belongs to the RuvB family. Homohexamer. Forms an RuvA(8)-RuvB(12)-Holliday junction (HJ) complex. HJ DNA is sandwiched between 2 RuvA tetramers; dsDNA enters through RuvA and exits via RuvB. An RuvB hexamer assembles on each DNA strand where it exits the tetramer. Each RuvB hexamer is contacted by two RuvA subunits (via domain III) on 2 adjacent RuvB subunits; this complex drives branch migration. In the full resolvosome a probable DNA-RuvA(4)-RuvB(12)-RuvC(2) complex forms which resolves the HJ.

It is found in the cytoplasm. It carries out the reaction ATP + H2O = ADP + phosphate + H(+). The RuvA-RuvB-RuvC complex processes Holliday junction (HJ) DNA during genetic recombination and DNA repair, while the RuvA-RuvB complex plays an important role in the rescue of blocked DNA replication forks via replication fork reversal (RFR). RuvA specifically binds to HJ cruciform DNA, conferring on it an open structure. The RuvB hexamer acts as an ATP-dependent pump, pulling dsDNA into and through the RuvAB complex. RuvB forms 2 homohexamers on either side of HJ DNA bound by 1 or 2 RuvA tetramers; 4 subunits per hexamer contact DNA at a time. Coordinated motions by a converter formed by DNA-disengaged RuvB subunits stimulates ATP hydrolysis and nucleotide exchange. Immobilization of the converter enables RuvB to convert the ATP-contained energy into a lever motion, pulling 2 nucleotides of DNA out of the RuvA tetramer per ATP hydrolyzed, thus driving DNA branch migration. The RuvB motors rotate together with the DNA substrate, which together with the progressing nucleotide cycle form the mechanistic basis for DNA recombination by continuous HJ branch migration. Branch migration allows RuvC to scan DNA until it finds its consensus sequence, where it cleaves and resolves cruciform DNA. The chain is Holliday junction branch migration complex subunit RuvB from Clostridium botulinum (strain Eklund 17B / Type B).